Here is a 101-residue protein sequence, read N- to C-terminus: Small ribosomal subunit protein bS18c (101 aa).

The span at M1–L19 shows a compositional bias: basic residues. The tract at residues M1–Q23 is disordered.

The protein belongs to the bacterial ribosomal protein bS18 family. Part of the 30S ribosomal subunit.

Its subcellular location is the plastid. It is found in the chloroplast. In Draba nemorosa (Woodland whitlowgrass), this protein is Small ribosomal subunit protein bS18c.